Consider the following 232-residue polypeptide: tRNA-uridine aminocarboxypropyltransferase (232 aa).

Zn(2+)-binding residues include C31, C34, C41, and C43. The DXTW signature appears at 137–140 (DGTW).

Belongs to the TDD superfamily. DTWD2 family. TapT subfamily. In terms of assembly, monomer in solution.

It carries out the reaction a uridine in tRNA + S-adenosyl-L-methionine = a 3-[(3S)-3-amino-3-carboxypropyl]uridine in tRNA + S-methyl-5'-thioadenosine + H(+). It catalyses the reaction uridine(47) in tRNA(Phe) + S-adenosyl-L-methionine = 3-[(3S)-3-amino-3-carboxypropyl]uridine(47) in tRNA(Phe) + S-methyl-5'-thioadenosine + H(+). With respect to regulation, the degree of the acp3U modification at U47 is dependent on the presence of the m7G modification at the preceding nucleotide G46. It also depends on medium conditions. Functionally, catalyzes the formation of 3-(3-amino-3-carboxypropyl)uridine (acp3U) at position 47 of tRNAs. Acp3U47 confers thermal stability on tRNA. This Escherichia coli (strain K12) protein is tRNA-uridine aminocarboxypropyltransferase.